Here is a 338-residue protein sequence, read N- to C-terminus: Holliday junction branch migration complex subunit RuvB (338 aa).

Residues 1-14 (MENDHGILSDHPSG) are compositionally biased toward basic and acidic residues. The tract at residues 1–21 (MENDHGILSDHPSGEEESQVE) is disordered. The tract at residues 3–185 (NDHGILSDHP…FGIVEHMNYY (183 aa)) is large ATPase domain (RuvB-L). ATP contacts are provided by residues Leu-24, Arg-25, Gly-66, Lys-69, Thr-70, Thr-71, 132-134 (EDY), Arg-175, Tyr-185, and Arg-222. Thr-70 contacts Mg(2+). The interval 186-256 (TQDELTKIIF…IVKQALSLLQ (71 aa)) is small ATPAse domain (RuvB-S). The segment at 259–338 (DRGLDEIDRK…LGIEYPTDKN (80 aa)) is head domain (RuvB-H). DNA is bound by residues Arg-314 and Arg-319.

The protein belongs to the RuvB family. Homohexamer. Forms an RuvA(8)-RuvB(12)-Holliday junction (HJ) complex. HJ DNA is sandwiched between 2 RuvA tetramers; dsDNA enters through RuvA and exits via RuvB. An RuvB hexamer assembles on each DNA strand where it exits the tetramer. Each RuvB hexamer is contacted by two RuvA subunits (via domain III) on 2 adjacent RuvB subunits; this complex drives branch migration. In the full resolvosome a probable DNA-RuvA(4)-RuvB(12)-RuvC(2) complex forms which resolves the HJ.

Its subcellular location is the cytoplasm. The enzyme catalyses ATP + H2O = ADP + phosphate + H(+). Functionally, the RuvA-RuvB-RuvC complex processes Holliday junction (HJ) DNA during genetic recombination and DNA repair, while the RuvA-RuvB complex plays an important role in the rescue of blocked DNA replication forks via replication fork reversal (RFR). RuvA specifically binds to HJ cruciform DNA, conferring on it an open structure. The RuvB hexamer acts as an ATP-dependent pump, pulling dsDNA into and through the RuvAB complex. RuvB forms 2 homohexamers on either side of HJ DNA bound by 1 or 2 RuvA tetramers; 4 subunits per hexamer contact DNA at a time. Coordinated motions by a converter formed by DNA-disengaged RuvB subunits stimulates ATP hydrolysis and nucleotide exchange. Immobilization of the converter enables RuvB to convert the ATP-contained energy into a lever motion, pulling 2 nucleotides of DNA out of the RuvA tetramer per ATP hydrolyzed, thus driving DNA branch migration. The RuvB motors rotate together with the DNA substrate, which together with the progressing nucleotide cycle form the mechanistic basis for DNA recombination by continuous HJ branch migration. Branch migration allows RuvC to scan DNA until it finds its consensus sequence, where it cleaves and resolves cruciform DNA. The polypeptide is Holliday junction branch migration complex subunit RuvB (Limosilactobacillus reuteri (strain DSM 20016) (Lactobacillus reuteri)).